Reading from the N-terminus, the 370-residue chain is 4-hydroxy-3-methylbut-2-en-1-yl diphosphate synthase (flavodoxin) (370 aa).

[4Fe-4S] cluster is bound by residues Cys-268, Cys-271, Cys-303, and Glu-310.

This sequence belongs to the IspG family. The cofactor is [4Fe-4S] cluster.

The catalysed reaction is (2E)-4-hydroxy-3-methylbut-2-enyl diphosphate + oxidized [flavodoxin] + H2O + 2 H(+) = 2-C-methyl-D-erythritol 2,4-cyclic diphosphate + reduced [flavodoxin]. It participates in isoprenoid biosynthesis; isopentenyl diphosphate biosynthesis via DXP pathway; isopentenyl diphosphate from 1-deoxy-D-xylulose 5-phosphate: step 5/6. Functionally, converts 2C-methyl-D-erythritol 2,4-cyclodiphosphate (ME-2,4cPP) into 1-hydroxy-2-methyl-2-(E)-butenyl 4-diphosphate. In Bacillus anthracis (strain A0248), this protein is 4-hydroxy-3-methylbut-2-en-1-yl diphosphate synthase (flavodoxin).